We begin with the raw amino-acid sequence, 173 residues long: MGLPRRAGDAAELRKSLKPLLEKRRRARINQSLSQLKGLILPLLGRENSNCSKLEKADVLEMTVRFLQELPASSWPTAAPLPCDSYREGYSACVARLARVLPACRVLEPAVSARLLEHLWRRAASATLDGGRAGDSSGPSAPAPAPASAPEPASAPVPSPPSPPCGPGLWRPW.

The 58-residue stretch at 13–70 (LRKSLKPLLEKRRRARINQSLSQLKGLILPLLGRENSNCSKLEKADVLEMTVRFLQEL) folds into the bHLH domain. Residues 86–119 (YREGYSACVARLARVLPACRVLEPAVSARLLEHL) enclose the Orange domain. The tract at residues 128–173 (LDGGRAGDSSGPSAPAPAPASAPEPASAPVPSPPSPPCGPGLWRPW) is disordered. A compositionally biased stretch (pro residues) spans 141–166 (APAPAPASAPEPASAPVPSPPSPPCG). The short motif at 170–173 (WRPW) is the WRPW motif element.

In terms of assembly, transcription repression requires formation of a complex with a corepressor protein of the Groucho/TLE family. In terms of tissue distribution, expressed in placenta, pancreatic cancer, colon cancer with RER, cervical cancer, and in head and neck tumors.

The protein resides in the nucleus. In terms of biological role, transcriptional repressor of genes that require a bHLH protein for their transcription. This Homo sapiens (Human) protein is Transcription factor HES-2 (HES2).